The primary structure comprises 1422 residues: Guanine nucleotide exchange factor subunit RIC1 (1422 aa).

2 WD repeats span residues 64–103 (TQFGSYKQAEWRPDSTMIAVSTANGYILFFHITSSRGDKY) and 304–343 (NKTGAVKLIRWSPDNSAVIVTWEYGGLSLWSVFGAQLICT). Disordered stretches follow at residues 442–462 (NPKYSSARAERMPRHEKSPFA) and 986–1005 (SGESETPPSTPTSQEPSSSG). Basic and acidic residues predominate over residues 449–460 (RAERMPRHEKSP). A phosphothreonine mark is found at Thr-991 and Thr-995. Phosphoserine is present on residues Ser-1014, Ser-1016, Ser-1018, Ser-1036, and Ser-1171. Residues 1021–1048 (AENVPPGKFGLQKTLSMPTGPSGKRWSK) form a disordered region. Disordered stretches follow at residues 1179–1198 (THRDTDRASSPGPQMQDAFL) and 1355–1422 (DTFQ…CSVS). Positions 1378 to 1396 (GSCSHGSISQSEPGSNNVV) are enriched in polar residues. Residues 1403 to 1412 (TTQADEEEPL) are compositionally biased toward acidic residues.

Belongs to the RIC1 family. In terms of assembly, forms a complex with RGP1; the interaction enhances RAB6A GTPase activity. Interacts (via central domain) with RGP1. Interacts with RAB6A; the interaction is direct with a preference for RAB6A-GDP. Interacts (via C-terminus domain) with RAB33B; the interaction is direct with a preference for RAB33B-GTP. Interacts with GJA1. Expressed in the eye lens.

Its subcellular location is the cytoplasm. The protein localises to the cytosol. It localises to the membrane. Functionally, the RIC1-RGP1 complex acts as a guanine nucleotide exchange factor (GEF), which activates RAB6A by exchanging bound GDP for free GTP, and may thereby be required for efficient fusion of endosome-derived vesicles with the Golgi compartment. The RIC1-RGP1 complex participates in the recycling of mannose-6-phosphate receptors. Required for phosphorylation and localization of GJA1. Is a regulator of procollagen transport and secretion, and is required for correct cartilage morphogenesis and development of the craniofacial skeleton. The polypeptide is Guanine nucleotide exchange factor subunit RIC1 (Mus musculus (Mouse)).